The sequence spans 155 residues: CASP-like protein 5B2 (155 aa).

Residues M1–R18 lie on the Cytoplasmic side of the membrane. A helical transmembrane segment spans residues V19 to A39. N40 carries N-linked (GlcNAc...) asparagine glycosylation. At N40–A43 the chain is on the extracellular side. A helical membrane pass occupies residues F44–L64. The Cytoplasmic portion of the chain corresponds to D65–N77. The helical transmembrane segment at A78–A98 threads the bilayer. Residues S99–E128 lie on the Extracellular side of the membrane. Residues L129–F149 traverse the membrane as a helical segment. Residues C150–F155 lie on the Cytoplasmic side of the membrane.

Belongs to the Casparian strip membrane proteins (CASP) family. Homodimer and heterodimers.

The protein localises to the cell membrane. This chain is CASP-like protein 5B2, found in Oryza sativa subsp. indica (Rice).